Consider the following 508-residue polypeptide: Photosystem II CP47 reaction center protein (508 aa).

6 consecutive transmembrane segments (helical) span residues 21–36 (SVHI…WAGS), 101–115 (IVFS…IWHW), 140–156 (GIHL…FGAF), 203–218 (IAAG…FHLS), 237–252 (VLSS…AFIV), and 457–472 (TFAL…HGAR).

This sequence belongs to the PsbB/PsbC family. PsbB subfamily. PSII is composed of 1 copy each of membrane proteins PsbA, PsbB, PsbC, PsbD, PsbE, PsbF, PsbH, PsbI, PsbJ, PsbK, PsbL, PsbM, PsbT, PsbX, PsbY, PsbZ, Psb30/Ycf12, at least 3 peripheral proteins of the oxygen-evolving complex and a large number of cofactors. It forms dimeric complexes. Binds multiple chlorophylls. PSII binds additional chlorophylls, carotenoids and specific lipids. is required as a cofactor.

The protein resides in the plastid. It is found in the chloroplast thylakoid membrane. In terms of biological role, one of the components of the core complex of photosystem II (PSII). It binds chlorophyll and helps catalyze the primary light-induced photochemical processes of PSII. PSII is a light-driven water:plastoquinone oxidoreductase, using light energy to abstract electrons from H(2)O, generating O(2) and a proton gradient subsequently used for ATP formation. The chain is Photosystem II CP47 reaction center protein from Pinus thunbergii (Japanese black pine).